A 228-amino-acid chain; its full sequence is MADS-box transcription factor 22 (228 aa).

An MADS-box domain is found at 1–61; the sequence is MARERREIKR…GKLSHFASSS (61 aa). One can recognise a K-box domain in the interval 86–176; the sequence is LNLEHSKYAH…RNQVSQISPA (91 aa). Residues 189–217 form a disordered region; it reads EGQSSESVMTALHSGSSQSQDNDDGSDVS.

As to expression, expressed in palea and stamen primordia. Expressed in shoots and coleoptiles.

The protein localises to the nucleus. In terms of biological role, probable transcription factor. May be required for spikelet (rice flower) development. Transcription factor that functions to support the MADS55 in its function as negative regulator of brassinosteroid signaling. This Oryza sativa subsp. japonica (Rice) protein is MADS-box transcription factor 22 (MADS22).